Here is a 495-residue protein sequence, read N- to C-terminus: Iroquois-class homeodomain protein irx-4-B (495 aa).

Residues 141–203 (GSTRRKNATR…NARRRLKKEN (63 aa)) constitute a DNA-binding region (homeobox; TALE-type). Residues 203 to 245 (NKMTWPPRNKCSDEKRPYDEEEEEEEDSQKATIKNEKKTVDEE) are disordered. Residues 235–245 (IKNEKKTVDEE) are compositionally biased toward basic and acidic residues.

It belongs to the TALE/IRO homeobox family.

It is found in the nucleus. Its function is as follows. Acts partially redundantly with other irx members in neural patterning. Required for formation of the posterior forebrain, midbrain, hindbrain, and to a lesser extent, spinal cord. Patterns the neuroectoderm in both the anterior/posterior and dorsal/ventral axes. Does not appear to play a role in pronephros kidney development. The sequence is that of Iroquois-class homeodomain protein irx-4-B (irx4-b) from Xenopus laevis (African clawed frog).